We begin with the raw amino-acid sequence, 103 residues long: Histone H4, minor (103 aa).

Gly residues predominate over residues 1–12 (MAGGKGGKGMGK). The interval 1-29 (MAGGKGGKGMGKVGAKRHSRKSNKASIEG) is disordered. 4 positions are modified to N6-acetyllysine: lysine 5, lysine 8, lysine 12, and lysine 16. The span at 14–23 (GAKRHSRKSN) shows a compositional bias: basic residues. The DNA-binding element occupies 16 to 21 (KRHSRK).

This sequence belongs to the histone H4 family. The nucleosome is a histone octamer containing two molecules each of H2A, H2B, H3 and H4 assembled in one H3-H4 heterotetramer and two H2A-H2B heterodimers. The octamer wraps approximately 147 bp of DNA.

The protein localises to the nucleus. Its subcellular location is the chromosome. Core component of nucleosome. Nucleosomes wrap and compact DNA into chromatin, limiting DNA accessibility to the cellular machineries which require DNA as a template. Histones thereby play a central role in transcription regulation, DNA repair, DNA replication and chromosomal stability. DNA accessibility is regulated via a complex set of post-translational modifications of histones, also called histone code, and nucleosome remodeling. This chain is Histone H4, minor, found in Tetrahymena pyriformis.